Here is an 83-residue protein sequence, read N- to C-terminus: Toxin Aam1 (83 aa).

An N-terminal signal peptide occupies residues 1 to 19 (MNYLVMISLALLLMIGVES). The 62-residue stretch at 21-82 (RDGYIVYPHN…PIYDRSYKCY (62 aa)) folds into the LCN-type CS-alpha/beta domain. Intrachain disulfides connect Cys31–Cys81, Cys35–Cys53, Cys39–Cys63, and Cys43–Cys65.

This sequence belongs to the long (4 C-C) scorpion toxin superfamily. Sodium channel inhibitor family. Alpha subfamily. The C-terminal basic residue is removed by a carboxypeptidase. In terms of tissue distribution, expressed by the venom gland.

It is found in the secreted. Functionally, alpha toxins bind voltage-independently at site-3 of sodium channels (Nav) and inhibit the inactivation of the activated channels, thereby blocking neuronal transmission. The chain is Toxin Aam1 (H1) from Androctonus amoreuxi (African fattail scorpion).